Consider the following 434-residue polypeptide: Serine hydroxymethyltransferase (434 aa).

Residues Leu-133 and 137–139 (GHL) contribute to the (6S)-5,6,7,8-tetrahydrofolate site. Lys-242 is modified (N6-(pyridoxal phosphate)lysine).

Belongs to the SHMT family. In terms of assembly, homodimer. Pyridoxal 5'-phosphate serves as cofactor.

The protein resides in the cytoplasm. The catalysed reaction is (6R)-5,10-methylene-5,6,7,8-tetrahydrofolate + glycine + H2O = (6S)-5,6,7,8-tetrahydrofolate + L-serine. Its pathway is one-carbon metabolism; tetrahydrofolate interconversion. It functions in the pathway amino-acid biosynthesis; glycine biosynthesis; glycine from L-serine: step 1/1. Catalyzes the reversible interconversion of serine and glycine with tetrahydrofolate (THF) serving as the one-carbon carrier. This reaction serves as the major source of one-carbon groups required for the biosynthesis of purines, thymidylate, methionine, and other important biomolecules. Also exhibits THF-independent aldolase activity toward beta-hydroxyamino acids, producing glycine and aldehydes, via a retro-aldol mechanism. The chain is Serine hydroxymethyltransferase from Methylorubrum populi (strain ATCC BAA-705 / NCIMB 13946 / BJ001) (Methylobacterium populi).